Reading from the N-terminus, the 142-residue chain is Large ribosomal subunit protein uL13 (142 aa).

This sequence belongs to the universal ribosomal protein uL13 family. In terms of assembly, part of the 50S ribosomal subunit.

Its function is as follows. This protein is one of the early assembly proteins of the 50S ribosomal subunit, although it is not seen to bind rRNA by itself. It is important during the early stages of 50S assembly. The chain is Large ribosomal subunit protein uL13 from Syntrophus aciditrophicus (strain SB).